A 330-amino-acid polypeptide reads, in one-letter code: 4-hydroxythreonine-4-phosphate dehydrogenase (330 aa).

Substrate contacts are provided by H134 and T135. A divalent metal cation-binding residues include H163, H208, and H263. Positions 271, 280, and 289 each coordinate substrate.

It belongs to the PdxA family. Homodimer. The cofactor is Zn(2+). Mg(2+) serves as cofactor. Co(2+) is required as a cofactor.

The protein localises to the cytoplasm. The catalysed reaction is 4-(phosphooxy)-L-threonine + NAD(+) = 3-amino-2-oxopropyl phosphate + CO2 + NADH. Its pathway is cofactor biosynthesis; pyridoxine 5'-phosphate biosynthesis; pyridoxine 5'-phosphate from D-erythrose 4-phosphate: step 4/5. In terms of biological role, catalyzes the NAD(P)-dependent oxidation of 4-(phosphooxy)-L-threonine (HTP) into 2-amino-3-oxo-4-(phosphooxy)butyric acid which spontaneously decarboxylates to form 3-amino-2-oxopropyl phosphate (AHAP). The sequence is that of 4-hydroxythreonine-4-phosphate dehydrogenase from Methylococcus capsulatus (strain ATCC 33009 / NCIMB 11132 / Bath).